Reading from the N-terminus, the 436-residue chain is Adenylosuccinate synthetase (436 aa).

GTP-binding positions include 22–28 (GDEGKGK) and 50–52 (GHE). The active-site Proton acceptor is D23. 2 residues coordinate Mg(2+): D23 and G50. Residues 23-26 (DEGK), 48-51 (NAGH), T141, R155, N231, T246, and R310 each bind IMP. The active-site Proton donor is H51. 306 to 312 (VSTARVR) is a substrate binding site. GTP-binding positions include R312, 338 to 340 (KMD), and 424 to 426 (GVG).

It belongs to the adenylosuccinate synthetase family. Homodimer. Requires Mg(2+) as cofactor.

The protein localises to the cytoplasm. It catalyses the reaction IMP + L-aspartate + GTP = N(6)-(1,2-dicarboxyethyl)-AMP + GDP + phosphate + 2 H(+). It functions in the pathway purine metabolism; AMP biosynthesis via de novo pathway; AMP from IMP: step 1/2. In terms of biological role, plays an important role in the salvage pathway for purine nucleotide biosynthesis. Catalyzes the first committed step in the biosynthesis of AMP from IMP. The chain is Adenylosuccinate synthetase from Babesia bovis.